The chain runs to 146 residues: Deoxyuridine 5'-triphosphate nucleotidohydrolase (146 aa).

Residues 65–67 (RSG), Asn-78, and 82–84 (TID) each bind substrate.

This sequence belongs to the dUTPase family. The cofactor is Mg(2+).

It carries out the reaction dUTP + H2O = dUMP + diphosphate + H(+). It participates in pyrimidine metabolism; dUMP biosynthesis; dUMP from dCTP (dUTP route): step 2/2. This enzyme is involved in nucleotide metabolism: it produces dUMP, the immediate precursor of thymidine nucleotides and it decreases the intracellular concentration of dUTP so that uracil cannot be incorporated into DNA. This chain is Deoxyuridine 5'-triphosphate nucleotidohydrolase, found in Treponema pallidum subsp. pallidum (strain SS14).